The chain runs to 275 residues: UPF0758 protein RL2068 (275 aa).

The tract at residues 1 to 45 (MAKGPVSTSSDDELPFETQEPIAADERSFFGGQPQKPSAPNARAA) is disordered. The region spanning 153-275 (VLSSWSSVIQ…HVSLKGLKLI (123 aa)) is the MPN domain. Zn(2+) contacts are provided by H224, H226, and D237. The JAMM motif signature appears at 224-237 (HNHPSGDPTPSRAD).

This sequence belongs to the UPF0758 family.

The polypeptide is UPF0758 protein RL2068 (Rhizobium johnstonii (strain DSM 114642 / LMG 32736 / 3841) (Rhizobium leguminosarum bv. viciae)).